Consider the following 113-residue polypeptide: U11-theraphotoxin-Hhn1f (113 aa).

Positions Met-1–Ala-21 are cleaved as a signal peptide. Positions Asp-22–Arg-74 are excised as a propeptide. The interval Glu-61–Cys-82 is disordered. 3 disulfides stabilise this stretch: Cys-75–Cys-90, Cys-82–Cys-95, and Cys-89–Cys-110.

This sequence belongs to the neurotoxin 14 (magi-1) family. 01 (HNTX-16) subfamily. As to expression, expressed by the venom gland.

Its subcellular location is the secreted. Probable ion channel inhibitor. The chain is U11-theraphotoxin-Hhn1f from Cyriopagopus hainanus (Chinese bird spider).